Here is a 297-residue protein sequence, read N- to C-terminus: Homoserine kinase (297 aa).

82-92 (PLTRGLGSSAS) serves as a coordination point for ATP.

Belongs to the GHMP kinase family. Homoserine kinase subfamily.

The protein resides in the cytoplasm. The enzyme catalyses L-homoserine + ATP = O-phospho-L-homoserine + ADP + H(+). The protein operates within amino-acid biosynthesis; L-threonine biosynthesis; L-threonine from L-aspartate: step 4/5. Its function is as follows. Catalyzes the ATP-dependent phosphorylation of L-homoserine to L-homoserine phosphate. The sequence is that of Homoserine kinase from Bacillus cereus (strain ATCC 10987 / NRS 248).